We begin with the raw amino-acid sequence, 194 residues long: Cyclin-dependent kinase inhibitor 4 (194 aa).

The span at 49 to 58 (LELRSRRLEK) shows a compositional bias: basic and acidic residues. 2 disordered regions span residues 49 to 70 (LELR…PRRR) and 107 to 139 (TRET…SHCK).

This sequence belongs to the CDI family. ICK/KRP subfamily.

This chain is Cyclin-dependent kinase inhibitor 4 (KRP4), found in Oryza sativa subsp. japonica (Rice).